A 181-amino-acid chain; its full sequence is Protein GrpE (181 aa).

Over residues M1–T20 the composition is skewed to polar residues. Positions M1 to E39 are disordered. Positions Q21–E39 are enriched in low complexity.

This sequence belongs to the GrpE family. In terms of assembly, homodimer.

It is found in the cytoplasm. Participates actively in the response to hyperosmotic and heat shock by preventing the aggregation of stress-denatured proteins, in association with DnaK and GrpE. It is the nucleotide exchange factor for DnaK and may function as a thermosensor. Unfolded proteins bind initially to DnaJ; upon interaction with the DnaJ-bound protein, DnaK hydrolyzes its bound ATP, resulting in the formation of a stable complex. GrpE releases ADP from DnaK; ATP binding to DnaK triggers the release of the substrate protein, thus completing the reaction cycle. Several rounds of ATP-dependent interactions between DnaJ, DnaK and GrpE are required for fully efficient folding. This is Protein GrpE from Burkholderia multivorans (strain ATCC 17616 / 249).